A 184-amino-acid chain; its full sequence is MAAARQTPRKLKIGAGSVVCQEAEIKGEVIIGSKTVVHPKARIIAEAGPIIIGDNNLIEEQVTIINPLQVEENEEVPPERIVMHIGCNNVFEVGSLCEAVKIGDNNILEAKSRVGRQTVLSHGCVIGARCEVTSQETIPENTVIYGQSCNRRVQAERPVPQSLQLDFLTKILPNYHHMKKSSRS.

This sequence belongs to the dynactin subunits 5/6 family. Dynactin subunit 6 subfamily. As to quaternary structure, subunit of dynactin, a multiprotein complex part of a tripartite complex with dynein and a adapter, such as BICDL1, BICD2 or HOOK3. The dynactin complex is built around ACTR1A/ACTB filament and consists of an actin-related filament composed of a shoulder domain, a pointed end and a barbed end.

The protein localises to the cytoplasm. It localises to the cytoskeleton. Part of the dynactin complex that activates the molecular motor dynein for ultra-processive transport along microtubules. The polypeptide is Dynactin subunit 6 (dctn6) (Nematostella vectensis (Starlet sea anemone)).